The following is a 193-amino-acid chain: Ion-translocating oxidoreductase complex subunit A (193 aa).

6 helical membrane-spanning segments follow: residues 5 to 25 (ILLI…FLGL), 39 to 59 (IGMG…AYLV), 72 to 92 (LRTL…EMVI), 102 to 122 (LLGI…VALL), 134 to 154 (VIYG…FAAL), and 171 to 191 (SIAL…SGLV).

It belongs to the NqrDE/RnfAE family. The complex is composed of six subunits: RnfA, RnfB, RnfC, RnfD, RnfE and RnfG.

Its subcellular location is the cell inner membrane. Part of a membrane-bound complex that couples electron transfer with translocation of ions across the membrane. In Histophilus somni (strain 2336) (Haemophilus somnus), this protein is Ion-translocating oxidoreductase complex subunit A.